Consider the following 178-residue polypeptide: Probable chorismate pyruvate-lyase (178 aa).

Substrate-binding residues include arginine 73, leucine 111, and glutamate 163.

Belongs to the UbiC family.

The protein localises to the cytoplasm. The enzyme catalyses chorismate = 4-hydroxybenzoate + pyruvate. Its pathway is cofactor biosynthesis; ubiquinone biosynthesis. Removes the pyruvyl group from chorismate, with concomitant aromatization of the ring, to provide 4-hydroxybenzoate (4HB) for the ubiquinone pathway. The sequence is that of Probable chorismate pyruvate-lyase from Pseudomonas aeruginosa (strain ATCC 15692 / DSM 22644 / CIP 104116 / JCM 14847 / LMG 12228 / 1C / PRS 101 / PAO1).